A 101-amino-acid chain; its full sequence is Aspartyl/glutamyl-tRNA(Asn/Gln) amidotransferase subunit C (101 aa).

It belongs to the GatC family. In terms of assembly, heterotrimer of A, B and C subunits.

It carries out the reaction L-glutamyl-tRNA(Gln) + L-glutamine + ATP + H2O = L-glutaminyl-tRNA(Gln) + L-glutamate + ADP + phosphate + H(+). The enzyme catalyses L-aspartyl-tRNA(Asn) + L-glutamine + ATP + H2O = L-asparaginyl-tRNA(Asn) + L-glutamate + ADP + phosphate + 2 H(+). Allows the formation of correctly charged Asn-tRNA(Asn) or Gln-tRNA(Gln) through the transamidation of misacylated Asp-tRNA(Asn) or Glu-tRNA(Gln) in organisms which lack either or both of asparaginyl-tRNA or glutaminyl-tRNA synthetases. The reaction takes place in the presence of glutamine and ATP through an activated phospho-Asp-tRNA(Asn) or phospho-Glu-tRNA(Gln). In Lactobacillus delbrueckii subsp. bulgaricus (strain ATCC 11842 / DSM 20081 / BCRC 10696 / JCM 1002 / NBRC 13953 / NCIMB 11778 / NCTC 12712 / WDCM 00102 / Lb 14), this protein is Aspartyl/glutamyl-tRNA(Asn/Gln) amidotransferase subunit C.